Consider the following 357-residue polypeptide: 3'(2'),5'-bisphosphate nucleotidase (357 aa).

D49 serves as the catalytic Proton acceptor. Mg(2+) is bound by residues E72, D142, I144, and D145. T147 functions as the Proton acceptor in the catalytic mechanism. The adenosine 3',5'-bisphosphate site is built by T147, H241, S264, K267, R281, and D294. Positions 241, 264, 267, 281, and 294 each coordinate AMP. D294 is a binding site for Mg(2+).

It belongs to the inositol monophosphatase superfamily. It depends on Mg(2+) as a cofactor.

Its subcellular location is the cytoplasm. The protein localises to the nucleus. It catalyses the reaction 3'-phosphoadenylyl sulfate + H2O = adenosine 5'-phosphosulfate + phosphate. It carries out the reaction adenosine 3',5'-bisphosphate + H2O = AMP + phosphate. The enzyme catalyses adenosine 2',5'-bisphosphate + H2O = AMP + phosphate. Phosphatase activity is very sensitive to lithium and moderately sensitive to sodium. The inhibitory effects of lithium and sodium are overcome by high concentrations of potassium. Lithium exerts its inhibitory action by blocking the products of the PAP hydrolysis at the active site. Functionally, phosphatase that converts adenosine 3'-phosphate 5'-phosphosulfate (PAPS) to adenosine 5'-phosphosulfate (APS) and 3'(2')-phosphoadenosine 5'-phosphate (PAP) to AMP. May regulate the flux of sulfur in the sulfur-activation pathway by converting PAPS to APS. Involved in salt tolerance. Confers resistance to lithium. Shows no activity on inositol mono- and diphosphates, 3'-AMP, AMP, nicotinamide adenine dinucleotide phosphate (NADP), and p-nitrophenylphosphate. The polypeptide is 3'(2'),5'-bisphosphate nucleotidase (MET22) (Saccharomyces cerevisiae (strain ATCC 204508 / S288c) (Baker's yeast)).